A 395-amino-acid chain; its full sequence is Elongation factor Tu (395 aa).

The region spanning 10 to 204 (KSHVNIGTIG…AVDEYIPTPE (195 aa)) is the tr-type G domain. Residues 19 to 26 (GHVDHGKT) form a G1 region. 19–26 (GHVDHGKT) is a GTP binding site. Thr26 serves as a coordination point for Mg(2+). The G2 stretch occupies residues 60–64 (GITIN). Residues 81-84 (DCPG) are G3. Residues 81–85 (DCPGH) and 136–139 (NKMD) each bind GTP. The interval 136–139 (NKMD) is G4. A G5 region spans residues 174–176 (SAL).

The protein belongs to the TRAFAC class translation factor GTPase superfamily. Classic translation factor GTPase family. EF-Tu/EF-1A subfamily. As to quaternary structure, monomer.

It is found in the cytoplasm. It carries out the reaction GTP + H2O = GDP + phosphate + H(+). In terms of biological role, GTP hydrolase that promotes the GTP-dependent binding of aminoacyl-tRNA to the A-site of ribosomes during protein biosynthesis. This Enterococcus faecalis (strain ATCC 700802 / V583) protein is Elongation factor Tu.